Reading from the N-terminus, the 378-residue chain is Cytochrome P450 monooxygenase pytD (378 aa).

Heme is bound at residue Cys321.

It belongs to the cytochrome P450 family. The cofactor is heme.

It participates in secondary metabolite biosynthesis. In terms of biological role, cytochrome P450 monooxygenase pytD; part of the gene cluster that mediates the biosynthesis of pyranterreones, a family of antioxidative compounds. The first step of pyranonigrins biosynthesis is performed by the hybrid PKS-NRPS synthetase pytA that condenses 4 malonyl-CoA units ato the acetyl starter unit by the modular PKS of pytA. The acyl chain is then connected to an L-serine through the amide bond by the modular NRPS of pytA. A tetramic acid is formed and released from the PKS-NRPS pytA to give pyranterreone 5 with the help of the thioesterase pytI. Pyranterreone 5 could be methylated by pytC to afford pyranterreone 6. Both pyranterreones 5 and 6 are subsequently oxidized by the FAD-linked oxidoreductase pytB and the cytochrome P450 monooxygenase pytD to form the fused gamma-pyrone core, resulting in pyranterreones 7 and 11, respectively. The hydroxy group at C-8 of pyranterreones 7 and 11 are dehydrated by the aspartyl protease pytH to form a delta-7 double bond to give pyranterreones 3 and 1, 2 accordingly. The exo-methylene of pyranterreone 3 could be reduced into a pendant methyl by reductase pytE to provide pyranterreone 4, also known as cordylactam. Pyranterreone 4 can be reconverted to pyranterreone 3 through pytB-catalyzed dehydrogenation or further oxidized to pyranterreones 9 and 10. This is Cytochrome P450 monooxygenase pytD from Aspergillus terreus (strain NIH 2624 / FGSC A1156).